The primary structure comprises 298 residues: Rhodomycin D methylesterase DnrP (298 aa).

The 253-residue stretch at Pro25–Leu277 folds into the AB hydrolase-1 domain.

Belongs to the methyl esterase DnrP family.

The catalysed reaction is rhodomycin D + H2O = 10-carboxy-13-deoxycarminomycin + methanol + H(+). It catalyses the reaction 4-O-methylrhodomycin D + H2O = 10-carboxy-13-deoxydaunorubicin + methanol + H(+). The protein operates within antibiotic biosynthesis; daunorubicin biosynthesis. Its pathway is antibiotic biosynthesis; carminomycin biosynthesis. Involved in the biosynthesis of the anthracyclines carminomycin and daunorubicin (daunomycin) which are aromatic polyketide antibiotics that exhibit high cytotoxicity and are widely applied in the chemotherapy of a variety of cancers. Catalyzes the removal of methyl group from the carbomethoxy group of rhodomycin D (10-carbomethoxy-13-deoxycarminomycin) and 4-O-methylrhodomycin D to yield 10-carboxy-13-deoxycarminomycin and 10-carboxy-13-deoxydaunorubicin, respectively. Could be also involved in the decarboxylation of 10-carboxy-13-deoxycarminomycin and 10-carboxy-13-deoxydaunorubicin to yield 13-deoxycarminomycin and 13-deoxydaunorubicin, respectively. It seems that DnrK may influence the ability of DnrP to carry out the decarboxylation. This Streptomyces peucetius protein is Rhodomycin D methylesterase DnrP (dnrP).